The chain runs to 1416 residues: Non-structural polyprotein 1AB (1416 aa).

Positions 104 to 146 (KLIHKANALQERLRLSQEEKATLTLDVQFLQHENVRLKELISK) form a coiled coil. Helical transmembrane passes span 154-174 (MKWI…GGYA), 239-259 (VFYY…LAIG), 286-306 (VLPT…TLMV), 313-333 (LLAI…LCFM), and 344-364 (GLIA…LTGT). Residues histidine 461, aspartate 489, and serine 551 each act as charge relay system; for serine protease activity in the active site. Positions 587–614 (VKAPSQVELLKEEIERLKAQLNSAAENP) form a coiled coil. The residue at position 693 (tyrosine 693) is an O-(5'-phospho-RNA)-tyrosine. The segment at 752–815 (NFDQAKPTPA…DPQPYSQTYG (64 aa)) is disordered. Over residues 783–795 (SQKKDKQLEHEQQ) the composition is skewed to basic and acidic residues. The segment covering 805–814 (NDPQPYSQTY) has biased composition (polar residues). One can recognise a RdRp catalytic domain in the interval 1161–1287 (KYFIEFDWTR…TTPSVPENYE (127 aa)).

It belongs to the astroviridae polyprotein 1AB family. Monomer. Post-translationally, cleaved by the viral and host proteases. The protease is probably autocatalytically cleaved.

It is found in the host membrane. It catalyses the reaction RNA(n) + a ribonucleoside 5'-triphosphate = RNA(n+1) + diphosphate. Responsible for the cleavage of the polyprotein into functional products. Its function is as follows. Protein covalently attached to the 5' extremity of the genomic and subgenomic RNAs. It may serve as a primer for the replicase. The sequence is that of Non-structural polyprotein 1AB (ORF1) from Homo sapiens (Human).